Consider the following 257-residue polypeptide: MLDRIRVVLVNTSHPGNIGGAARAMKNMGLSQLVLVQPESFPHGDAVARASGATDILDAARVVDTLEEALSGCSVVLGTSARDRRIPWPLLDPRECATTCLEHLEANGEVALVFGREYAGLTNEELQRCQFHVHIPSDPEFGSLNLAAAVQVLTYEVRMAWLAAQGKPTKMEKFESTSMLNTELVTADELELYYAHLERTLIDIGFLDPEKPRHLMSRLRRLYGRSAISKLEMNILRGILTETQKVARGLSYKRSDD.

Residues 79–82 (TSAR), 115–117 (GRE), Ile-135, and 142–144 (GSL) each bind S-adenosyl-L-methionine.

Belongs to the class IV-like SAM-binding methyltransferase superfamily. RNA methyltransferase TrmH family. As to quaternary structure, homodimer.

The protein localises to the cytoplasm. It carries out the reaction cytidine(32) in tRNA + S-adenosyl-L-methionine = 2'-O-methylcytidine(32) in tRNA + S-adenosyl-L-homocysteine + H(+). It catalyses the reaction uridine(32) in tRNA + S-adenosyl-L-methionine = 2'-O-methyluridine(32) in tRNA + S-adenosyl-L-homocysteine + H(+). The enzyme catalyses adenosine(32) in tRNA + S-adenosyl-L-methionine = 2'-O-methyladenosine(32) in tRNA + S-adenosyl-L-homocysteine + H(+). Its function is as follows. Catalyzes the formation of 2'O-methylated cytidine (Cm32), 2'O-methylated uridine (Um32) or 2'O-methylated adenosine (Am32) at position 32 in tRNA. Confers resistance to oxidative stress. The chain is tRNA (cytidine/uridine/adenosine-2'-O-)-methyltransferase TrmJ from Pseudomonas aeruginosa (strain UCBPP-PA14).